We begin with the raw amino-acid sequence, 349 residues long: Divinyl chlorophyll a/b light-harvesting protein PcbE (349 aa).

6 consecutive transmembrane segments (helical) span residues 27–47, 65–85, 88–108, 201–221, 241–261, and 308–328; these read FIAA…GSTL, IFLA…AWTG, VASI…GGLL, VLGG…FHIA, AILS…AFWC, and LANV…WHAL.

Belongs to the PsbB/PsbC family. IsiA/Pcb subfamily. As to quaternary structure, the antenna complex consists of divinyl chlorophylls (a and b) and divinyl chlorophyll a/b binding proteins and binds more divinyl chlorophyll b than does the antenna complex from high-light-adapted Prochlorococcus. Divinyl chlorophyll a is required as a cofactor. The cofactor is divinyl chlorophyll b.

The protein resides in the cellular thylakoid membrane. Its function is as follows. The antenna complex functions as a light receptor, it captures and delivers excitation energy to photosystems II and I. The Prochlorales pcb genes are not related to higher plant LHCs. The chain is Divinyl chlorophyll a/b light-harvesting protein PcbE (pcbE) from Prochlorococcus marinus (strain NATL2A).